Reading from the N-terminus, the 103-residue chain is Large ribosomal subunit protein bL21 (103 aa).

It belongs to the bacterial ribosomal protein bL21 family. As to quaternary structure, part of the 50S ribosomal subunit. Contacts protein L20.

Its function is as follows. This protein binds to 23S rRNA in the presence of protein L20. This Marinobacter nauticus (strain ATCC 700491 / DSM 11845 / VT8) (Marinobacter aquaeolei) protein is Large ribosomal subunit protein bL21.